Consider the following 138-residue polypeptide: Basic phospholipase A2 homolog TM-N49 (138 aa).

A signal peptide spans 1-16; it reads MRTLWIMAVLLLGVEG. 7 disulfide bridges follow: cysteine 42–cysteine 131, cysteine 44–cysteine 60, cysteine 59–cysteine 111, cysteine 65–cysteine 138, cysteine 66–cysteine 104, cysteine 73–cysteine 97, and cysteine 91–cysteine 102.

The protein belongs to the phospholipase A2 family. Group II subfamily. N49 sub-subfamily. As to quaternary structure, homodimer; non-covalently linked. In terms of tissue distribution, expressed by the venom gland.

It is found in the secreted. Its function is as follows. Snake venom phospholipase A2 (PLA2) that exhibits potent myotoxic activity causing inflammatory cell infiltration, severe myoedema, myonecrosis and myolysis in the gastrocnemius muscles of BALB/c mice. The polypeptide is Basic phospholipase A2 homolog TM-N49 (Protobothrops mucrosquamatus (Taiwan habu)).